The primary structure comprises 268 residues: MLPSIAKHAASHQIHPLKKHGQNFIFDGSLCDKIVRASGLEENSNVLEIGPGTGGLTRSILHKNPKLLTVIETDERCIPLLNEIKQYHPNLNIIKQDALKLKLSDLNTNKITIISNLPYHIGTELVIRWLKESSLVASMTLMLQKEVVERICAKPSTKAYGRLSVICSLIATVEKCFDVAPTAFYPPPKVYSAIVKLTPLENIPNSDLISKVELITKMAFAGRRKMIKSSLKNLAPNISELLAKLNISDNCRAENLTPNDYLSLASLI.

Residues N23, I25, G50, E72, D97, and N116 each contribute to the S-adenosyl-L-methionine site.

Belongs to the class I-like SAM-binding methyltransferase superfamily. rRNA adenine N(6)-methyltransferase family. RsmA subfamily.

The protein resides in the cytoplasm. The catalysed reaction is adenosine(1518)/adenosine(1519) in 16S rRNA + 4 S-adenosyl-L-methionine = N(6)-dimethyladenosine(1518)/N(6)-dimethyladenosine(1519) in 16S rRNA + 4 S-adenosyl-L-homocysteine + 4 H(+). Functionally, specifically dimethylates two adjacent adenosines (A1518 and A1519) in the loop of a conserved hairpin near the 3'-end of 16S rRNA in the 30S particle. May play a critical role in biogenesis of 30S subunits. The polypeptide is Ribosomal RNA small subunit methyltransferase A (Rickettsia bellii (strain RML369-C)).